Consider the following 264-residue polypeptide: 3-methyl-2-oxobutanoate hydroxymethyltransferase (264 aa).

Asp45 and Asp84 together coordinate Mg(2+). 3-methyl-2-oxobutanoate-binding positions include 45–46 (DS), Asp84, and Lys112. Glu114 lines the Mg(2+) pocket. Glu181 (proton acceptor) is an active-site residue.

This sequence belongs to the PanB family. In terms of assembly, homodecamer; pentamer of dimers. Mg(2+) serves as cofactor.

It localises to the cytoplasm. It carries out the reaction 3-methyl-2-oxobutanoate + (6R)-5,10-methylene-5,6,7,8-tetrahydrofolate + H2O = 2-dehydropantoate + (6S)-5,6,7,8-tetrahydrofolate. Its pathway is cofactor biosynthesis; (R)-pantothenate biosynthesis; (R)-pantoate from 3-methyl-2-oxobutanoate: step 1/2. Functionally, catalyzes the reversible reaction in which hydroxymethyl group from 5,10-methylenetetrahydrofolate is transferred onto alpha-ketoisovalerate to form ketopantoate. This is 3-methyl-2-oxobutanoate hydroxymethyltransferase from Vibrio cholerae serotype O1 (strain ATCC 39541 / Classical Ogawa 395 / O395).